We begin with the raw amino-acid sequence, 361 residues long: Septin-2 (361 aa).

Residue Tyr-17 is modified to Phosphotyrosine. Residues 34–306 enclose the Septin-type G domain; it reads KGFEFTLMVV…ENFRSERLKR (273 aa). A G1 motif region spans residues 44–51; it reads GESGLGKS. Residues 44–51, Thr-78, Gly-104, and 183–191 each bind GTP; these read GESGLGKS and KADTLTLKE. A G3 motif region spans residues 101 to 104; the sequence is DTPG. Residues 182–185 are G4 motif; sequence AKAD. Lys-190 carries the post-translational modification N6-acetyllysine. Tyr-211 is subject to Phosphotyrosine. Residue Ser-218 is modified to Phosphoserine. Gly-241 and Arg-256 together coordinate GTP. The interval 260–270 is important for dimerization; it reads WGVVEVENPEH.

It belongs to the TRAFAC class TrmE-Era-EngA-EngB-Septin-like GTPase superfamily. Septin GTPase family. In terms of assembly, septins polymerize into heterooligomeric protein complexes that form filaments, and associate with cellular membranes, actin filaments and microtubules. GTPase activity is required for filament formation. Septin filaments are assembled from asymmetrical heterotrimers, composed of SEPTIN2, SEPTIN6 and SEPTIN7 that associate head-to-head to form a hexameric unit. Interaction between SEPTIN2 and SEPTIN7 seems indirect. Also interacts with SEPTIN9 and SEPTIN5. Interaction with SEPTIN4 not detected. Component of a septin core octameric complex consisting of SEPTIN12, SEPTIN7, SEPTIN6 and SEPTIN2 or SEPTIN4 in the order 12-7-6-2-2-6-7-12 or 12-7-6-4-4-6-7-12 and located in the sperm annulus. Interacts with MAP4. Interacts with DZIP1L.

It localises to the cytoplasm. Its subcellular location is the cytoskeleton. It is found in the spindle. The protein localises to the cleavage furrow. The protein resides in the midbody. It localises to the cell cortex. Its subcellular location is the cell projection. It is found in the cilium membrane. The protein localises to the cilium. The protein resides in the flagellum. Filament-forming cytoskeletal GTPase. Forms a filamentous structure with SEPTIN12, SEPTIN6, SEPTIN2 and probably SEPTIN4 at the sperm annulus which is required for the structural integrity and motility of the sperm tail during postmeiotic differentiation. Required for normal organization of the actin cytoskeleton. Plays a role in the biogenesis of polarized columnar-shaped epithelium by maintaining polyglutamylated microtubules, thus facilitating efficient vesicle transport, and by impeding MAP4 binding to tubulin. Required for the progression through mitosis. Forms a scaffold at the midplane of the mitotic splindle required to maintain CENPE localization at kinetochores and consequently chromosome congression. During anaphase, may be required for chromosome segregation and spindle elongation. Plays a role in ciliogenesis and collective cell movements. In cilia, required for the integrity of the diffusion barrier at the base of the primary cilium that prevents diffusion of transmembrane proteins between the cilia and plasma membranes: probably acts by regulating the assembly of the tectonic-like complex (also named B9 complex) by localizing TMEM231 protein. This Rattus norvegicus (Rat) protein is Septin-2.